A 455-amino-acid chain; its full sequence is Serine--tRNA ligase (455 aa).

252 to 254 is a binding site for L-serine; that stretch reads TAE. ATP contacts are provided by residues 283–285 and Val-299; that span reads RKE. Residue Glu-306 coordinates L-serine. 370–373 provides a ligand contact to ATP; it reads EVVS. Residue Thr-406 coordinates L-serine.

This sequence belongs to the class-II aminoacyl-tRNA synthetase family. Type-1 seryl-tRNA synthetase subfamily. Homodimer. The tRNA molecule binds across the dimer.

The protein localises to the cytoplasm. The enzyme catalyses tRNA(Ser) + L-serine + ATP = L-seryl-tRNA(Ser) + AMP + diphosphate + H(+). The catalysed reaction is tRNA(Sec) + L-serine + ATP = L-seryl-tRNA(Sec) + AMP + diphosphate + H(+). The protein operates within aminoacyl-tRNA biosynthesis; selenocysteinyl-tRNA(Sec) biosynthesis; L-seryl-tRNA(Sec) from L-serine and tRNA(Sec): step 1/1. Its function is as follows. Catalyzes the attachment of serine to tRNA(Ser). Is also able to aminoacylate tRNA(Sec) with serine, to form the misacylated tRNA L-seryl-tRNA(Sec), which will be further converted into selenocysteinyl-tRNA(Sec). This is Serine--tRNA ligase from Pyrococcus abyssi (strain GE5 / Orsay).